We begin with the raw amino-acid sequence, 214 residues long: MHRHSVLRLARQAGGLPLVELPPPYLAPSLHFSLIRSPVQSSNFSSTTPVAGHGRDLSKSRGVSAIHRTGPKFKLGVSKYPLPKPVSPEALEKRNPTPDHGLWGFFPKDRQALSTPEYDHAHGRSWSIQELREKSWEDLHALWWVCVKERNRIATSNLERERLKAGYGEYESSERDRVIRVTQNGIKHVLRERWYAWEDAQKLYKDGYRPQDEE.

The protein belongs to the universal ribosomal protein uL29 family. Component of the mitochondrial large ribosomal subunit. Mature mitochondrial ribosomes consist of a small (37S) and a large (54S) subunit. The 37S subunit contains at least 33 different proteins and 1 molecule of RNA (15S). The 54S subunit contains at least 45 different proteins and 1 molecule of RNA (21S).

The protein localises to the mitochondrion. This Aspergillus terreus (strain NIH 2624 / FGSC A1156) protein is Large ribosomal subunit protein uL29m (mrpl4).